Reading from the N-terminus, the 455-residue chain is Kynurenine 3-monooxygenase (455 aa).

This sequence belongs to the aromatic-ring hydroxylase family. KMO subfamily. It depends on FAD as a cofactor.

The catalysed reaction is L-kynurenine + NADPH + O2 + H(+) = 3-hydroxy-L-kynurenine + NADP(+) + H2O. It functions in the pathway cofactor biosynthesis; NAD(+) biosynthesis; quinolinate from L-kynurenine: step 1/3. In terms of biological role, catalyzes the hydroxylation of L-kynurenine (L-Kyn) to form 3-hydroxy-L-kynurenine (L-3OHKyn). Required for synthesis of quinolinic acid. The protein is Kynurenine 3-monooxygenase of Stenotrophomonas maltophilia (strain K279a).